Here is a 201-residue protein sequence, read N- to C-terminus: LIM domain-containing protein PLIM2b (201 aa).

LIM zinc-binding domains lie at 8-68 (DKCT…LFKE) and 103-163 (DKCA…LFME). The interval 171-201 (KKKSESQEVLPEVVPEEQPAPPPPDENREDN) is disordered. Residues 177–187 (QEVLPEVVPEE) show a composition bias toward low complexity.

In terms of assembly, interacts with NEK3.

This chain is LIM domain-containing protein PLIM2b, found in Oryza sativa subsp. japonica (Rice).